The following is a 436-amino-acid chain: Trigger factor (436 aa).

A PPIase FKBP-type domain is found at 162 to 247 (GDRVIIDFEG…LNNVSEPTLP (86 aa)).

It belongs to the FKBP-type PPIase family. Tig subfamily.

The protein localises to the cytoplasm. It catalyses the reaction [protein]-peptidylproline (omega=180) = [protein]-peptidylproline (omega=0). In terms of biological role, involved in protein export. Acts as a chaperone by maintaining the newly synthesized protein in an open conformation. Functions as a peptidyl-prolyl cis-trans isomerase. The polypeptide is Trigger factor (Neisseria gonorrhoeae (strain ATCC 700825 / FA 1090)).